The following is a 267-amino-acid chain: Ribosomal RNA small subunit methyltransferase A (267 aa).

S-adenosyl-L-methionine contacts are provided by Leu20, Gly45, Glu68, Asp91, and Asn113.

This sequence belongs to the class I-like SAM-binding methyltransferase superfamily. rRNA adenine N(6)-methyltransferase family. RsmA subfamily.

The protein resides in the cytoplasm. It catalyses the reaction adenosine(1518)/adenosine(1519) in 16S rRNA + 4 S-adenosyl-L-methionine = N(6)-dimethyladenosine(1518)/N(6)-dimethyladenosine(1519) in 16S rRNA + 4 S-adenosyl-L-homocysteine + 4 H(+). In terms of biological role, specifically dimethylates two adjacent adenosines (A1518 and A1519) in the loop of a conserved hairpin near the 3'-end of 16S rRNA in the 30S particle. May play a critical role in biogenesis of 30S subunits. The polypeptide is Ribosomal RNA small subunit methyltransferase A (Blochmanniella pennsylvanica (strain BPEN)).